The chain runs to 93 residues: UPF0358 protein lin1058 (93 aa).

Belongs to the UPF0358 family.

This chain is UPF0358 protein lin1058, found in Listeria innocua serovar 6a (strain ATCC BAA-680 / CLIP 11262).